We begin with the raw amino-acid sequence, 69 residues long: Cytochrome c oxidase subunit 8A, mitochondrial (69 aa).

The transit peptide at 1-25 directs the protein to the mitochondrion; that stretch reads MSVLTSLLLRGLTGSARWLPVPRAK. The short motif at 2 to 19 is the SIFI-degron element; that stretch reads SVLTSLLLRGLTGSARWL. At 26–36 the chain is on the mitochondrial matrix side; sequence VHSMPPEVELG. Residues 37-60 traverse the membrane as a helical segment; the sequence is IMEKAIGLTSCFVSLFLPAGWILS. Over 61-69 the chain is Mitochondrial intermembrane; it reads HLEDYKRPE.

This sequence belongs to the cytochrome c oxidase VIII family. Component of the cytochrome c oxidase (complex IV, CIV), a multisubunit enzyme composed of 14 subunits. The complex is composed of a catalytic core of 3 subunits MT-CO1, MT-CO2 and MT-CO3, encoded in the mitochondrial DNA, and 11 supernumerary subunits COX4I, COX5A, COX5B, COX6A, COX6B, COX6C, COX7A, COX7B, COX7C, COX8 and NDUFA4, which are encoded in the nuclear genome. The complex exists as a monomer or a dimer and forms supercomplexes (SCs) in the inner mitochondrial membrane with NADH-ubiquinone oxidoreductase (complex I, CI) and ubiquinol-cytochrome c oxidoreductase (cytochrome b-c1 complex, complex III, CIII), resulting in different assemblies (supercomplex SCI(1)III(2)IV(1) and megacomplex MCI(2)III(2)IV(2)). Post-translationally, in response to mitochondrial stress, the precursor protein is ubiquitinated by the SIFI complex in the cytoplasm before mitochondrial import, leading to its degradation. Within the SIFI complex, UBR4 initiates ubiquitin chain that are further elongated or branched by KCMF1.

Its subcellular location is the mitochondrion inner membrane. It participates in energy metabolism; oxidative phosphorylation. In terms of biological role, component of the cytochrome c oxidase, the last enzyme in the mitochondrial electron transport chain which drives oxidative phosphorylation. The respiratory chain contains 3 multisubunit complexes succinate dehydrogenase (complex II, CII), ubiquinol-cytochrome c oxidoreductase (cytochrome b-c1 complex, complex III, CIII) and cytochrome c oxidase (complex IV, CIV), that cooperate to transfer electrons derived from NADH and succinate to molecular oxygen, creating an electrochemical gradient over the inner membrane that drives transmembrane transport and the ATP synthase. Cytochrome c oxidase is the component of the respiratory chain that catalyzes the reduction of oxygen to water. Electrons originating from reduced cytochrome c in the intermembrane space (IMS) are transferred via the dinuclear copper A center (CU(A)) of subunit 2 and heme A of subunit 1 to the active site in subunit 1, a binuclear center (BNC) formed by heme A3 and copper B (CU(B)). The BNC reduces molecular oxygen to 2 water molecules using 4 electrons from cytochrome c in the IMS and 4 protons from the mitochondrial matrix. The protein is Cytochrome c oxidase subunit 8A, mitochondrial (COX8A) of Macaca silenus (Lion-tailed macaque).